The chain runs to 97 residues: Late transcription unit B protein (97 aa).

A disordered region spans residues 24 to 45; sequence SIEGETKKEHKHHYSTASKEKE.

The polypeptide is Late transcription unit B protein (ltuB) (Chlamydia trachomatis serovar D (strain ATCC VR-885 / DSM 19411 / UW-3/Cx)).